The following is a 79-amino-acid chain: RNA-binding protein Hfq (79 aa).

In terms of domain architecture, Sm spans 10–70; it reads DVFLKTVRKQ…ISTIMPGQPI (61 aa).

Belongs to the Hfq family. Homohexamer.

Functionally, RNA chaperone that binds small regulatory RNA (sRNAs) and mRNAs to facilitate mRNA translational regulation in response to envelope stress, environmental stress and changes in metabolite concentrations. Also binds with high specificity to tRNAs. The sequence is that of RNA-binding protein Hfq from Bartonella bacilliformis (strain ATCC 35685 / KC583 / Herrer 020/F12,63).